The sequence spans 1482 residues: Glutamate receptor ionotropic, NMDA 2B (1482 aa).

The signal sequence occupies residues 1–26 (MKPSAECCSPKFWLVLAVLAVSGSKA). Residues 27–557 (RSQKSPPSIG…SAFLEPFSAD (531 aa)) lie on the Extracellular side of the membrane. The N-linked (GlcNAc...) asparagine glycan is linked to Asn74. Cys86 and Cys321 are disulfide-bonded. His127 and Glu284 together coordinate Zn(2+). N-linked (GlcNAc...) asparagine glycans are attached at residues Asn341, Asn348, Asn444, and Asn491. 2 cysteine pairs are disulfide-bonded: Cys429–Cys456 and Cys436–Cys457. The L-glutamate site is built by Thr514 and Arg519. Asn542 carries N-linked (GlcNAc...) asparagine glycosylation. Residues 558-576 (VWVMMFVMLLIVSAVAVFV) traverse the membrane as a helical segment. Over 577–603 (FEYFSPVGYNRCLADGREPGGPSFTIG) the chain is Cytoplasmic. Positions 604-623 (KAIWLLWGLVFNNSVPVQNP) form an intramembrane region, discontinuously helical. A pore-forming region spans residues 604-623 (KAIWLLWGLVFNNSVPVQNP). Over 624–630 (KGTTSKI) the chain is Cytoplasmic. The helical transmembrane segment at 631–646 (MVSVWAFFAVIFLASY) threads the bilayer. Topologically, residues 647 to 817 (TANLAAFMIQ…VMSSQLDIDN (171 aa)) are extracellular. N-linked (GlcNAc...) asparagine glycosylation occurs at Asn688. Residues Ser690, Thr691, and Asp732 each contribute to the L-glutamate site. Cys746 and Cys801 are disulfide-bonded. A helical membrane pass occupies residues 818–837 (MAGVFYMLGAAMALSLITFI). The Cytoplasmic portion of the chain corresponds to 838 to 1482 (CEHLFYWQFR…EKLSSIESDV (645 aa)). Ser882, Ser886, Ser917, and Ser920 each carry phosphoserine. 2 positions are modified to phosphotyrosine: Tyr962 and Tyr1039. Residues Ser1058, Ser1061, and Ser1064 each carry the phosphoserine modification. 2 positions are modified to phosphotyrosine: Tyr1109 and Tyr1133. Ser1143 carries the phosphoserine modification. Tyr1155 is modified (phosphotyrosine). A disordered region spans residues 1161–1194 (DFKRDSVSGGGPCTNRSHLKHGTGEKHGVVGGVP). Phosphoserine occurs at positions 1255 and 1259. Positions 1269–1301 (PVAVTSNASSTKYPQSPTNSKAQKKNRNKLRRQ) are disordered. The span at 1272–1289 (VTSNASSTKYPQSPTNSK) shows a compositional bias: polar residues. Positions 1290–1301 (AQKKNRNKLRRQ) are enriched in basic residues. The interval 1292–1304 (KKNRNKLRRQHSY) is interaction with DAPK1. Position 1303 is a phosphoserine (Ser1303). Tyr1472 bears the Phosphotyrosine mark. The short motif at 1480 to 1482 (SDV) is the PDZ-binding element.

This sequence belongs to the glutamate-gated ion channel (TC 1.A.10.1) family. NR2B/GRIN2B subfamily. In terms of assembly, heterotetramer. Forms heterotetrameric channels composed of two GluN1/zeta subunits (GRIN1), and two identical GluN2/epsilon subunits (GRIN2A, GRIN2B, GRIN2C or GRIN2D) or GluN3 subunits (GRIN3A or GRIN3B) (in vitro). Can also form heterotetrameric channels that contain at least two GluN1 subunits and at least two different GluN2 subunits (or a combination of one GluN2 and one GluN3 subunits) (in vitro). In vivo, the subunit composition may depend on the expression levels of the different subunits. Found in a complex with GRIN1, GRIN3A and PPP2CB. Found in a complex with GRIN1 and GRIN3B. Interacts with MAGI3. Interacts with HIP1 and NETO1. Interacts with PDZ domains of PATJ, DLG3 and DLG4. Interacts with DAPK1. Found in a complex with GRIN1 and PRR7. Interacts with PRR7. Interacts with CAMK2A. Interacts with ARC; preventing ARC oligomerization. Interacts with TMEM25. Interacts (via the extreme C-terminus) with FRMPD2 (via the second PDZ domain); the interaction is direct and is likely to promote NMDAR-mediated neural signal transmission. Interacts with FAM81A; the interaction facilitates condensate formation via liquid-liquid phase separation. In terms of processing, phosphorylated on tyrosine residues. Phosphorylation at Ser-1303 by DAPK1 enhances synaptic NMDA receptor channel activity. Expressed in the hippocampus including the dentate gyrus (at protein level). Detected in adult olfactory bulb, brain cortex, hippocampus, striatum, thalamus, superior colliculus, with much lower levels in inferior colliculus, midbrain and cerebellum.

The protein localises to the cell membrane. It is found in the postsynaptic cell membrane. The protein resides in the late endosome. It localises to the lysosome. Its subcellular location is the cytoplasm. The protein localises to the cytoskeleton. It carries out the reaction Ca(2+)(in) = Ca(2+)(out). The enzyme catalyses Na(+)(in) = Na(+)(out). It catalyses the reaction K(+)(in) = K(+)(out). With respect to regulation, NMDA glutamate receptor activity is inhibited by micromolar levels of zinc ions. NMDA glutamate receptor activity is inhibited by ifenprodil. Its function is as follows. Component of N-methyl-D-aspartate (NMDA) receptors (NMDARs) that function as heterotetrameric, ligand-gated cation channels with high calcium permeability and voltage-dependent block by Mg(2+). Participates in synaptic plasticity for learning and memory formation by contributing to the long-term depression (LTD) of hippocampus membrane currents. Channel activation requires binding of the neurotransmitter L-glutamate to the GluN2 subunit, glycine or D-serine binding to the GluN1 subunit, plus membrane depolarization to eliminate channel inhibition by Mg(2+). NMDARs mediate simultaneously the potasium efflux and the influx of calcium and sodium. Each GluN2 subunit confers differential attributes to channel properties, including activation, deactivation and desensitization kinetics, pH sensitivity, Ca2(+) permeability, and binding to allosteric modulators. In concert with DAPK1 at extrasynaptic sites, acts as a central mediator for stroke damage. Its phosphorylation at Ser-1303 by DAPK1 enhances synaptic NMDA receptor channel activity inducing injurious Ca2+ influx through them, resulting in an irreversible neuronal death. In Rattus norvegicus (Rat), this protein is Glutamate receptor ionotropic, NMDA 2B.